The sequence spans 469 residues: Neuraminidase (469 aa).

Residues 1–9 (MNPNQKIIT) lie on the Intravirion side of the membrane. A helical transmembrane segment spans residues 10–30 (IGSVSLTIATICFLMQIAILV). The segment at 11 to 33 (GSVSLTIATICFLMQIAILVTTV) is involved in apical transport and lipid raft association. The Virion surface segment spans residues 31 to 469 (TTVTLHFKQY…DGADINLMPI (439 aa)). Residues 36–88 (HFKQYECDSPANNQVMPCEPIIIERNITEIVYLTNTTIEKEICPKLVEYRNWS) form a hypervariable stalk region region. Residues N61, N70, and N86 are each glycosylated (N-linked (GlcNAc...) asparagine; by host). Residues 91-469 (QCKITGFAPF…DGADINLMPI (379 aa)) form a head of neuraminidase region. Disulfide bonds link C92/C417, C124/C129, C183/C230, C232/C237, C278/C291, C280/C289, C318/C337, and C421/C447. R118 lines the substrate pocket. N146 is a glycosylation site (N-linked (GlcNAc...) asparagine; by host). D151 (proton donor/acceptor) is an active-site residue. Position 152 (R152) interacts with substrate. 2 N-linked (GlcNAc...) asparagine; by host glycosylation sites follow: N200 and N234. 276-277 (EE) contributes to the substrate binding site. R292 serves as a coordination point for substrate. Residues D293, G297, and D324 each coordinate Ca(2+). Residue R371 participates in substrate binding. Residue N402 is glycosylated (N-linked (GlcNAc...) asparagine; by host). The active-site Nucleophile is the Y406.

Belongs to the glycosyl hydrolase 34 family. Homotetramer. Ca(2+) is required as a cofactor. In terms of processing, N-glycosylated.

It is found in the virion membrane. Its subcellular location is the host apical cell membrane. It catalyses the reaction Hydrolysis of alpha-(2-&gt;3)-, alpha-(2-&gt;6)-, alpha-(2-&gt;8)- glycosidic linkages of terminal sialic acid residues in oligosaccharides, glycoproteins, glycolipids, colominic acid and synthetic substrates.. Its activity is regulated as follows. Inhibited by the neuraminidase inhibitors zanamivir (Relenza) and oseltamivir (Tamiflu). These drugs interfere with the release of progeny virus from infected cells and are effective against all influenza strains. Resistance to neuraminidase inhibitors is quite rare. Its function is as follows. Catalyzes the removal of terminal sialic acid residues from viral and cellular glycoconjugates. Cleaves off the terminal sialic acids on the glycosylated HA during virus budding to facilitate virus release. Additionally helps virus spread through the circulation by further removing sialic acids from the cell surface. These cleavages prevent self-aggregation and ensure the efficient spread of the progeny virus from cell to cell. Otherwise, infection would be limited to one round of replication. Described as a receptor-destroying enzyme because it cleaves a terminal sialic acid from the cellular receptors. May facilitate viral invasion of the upper airways by cleaving the sialic acid moieties on the mucin of the airway epithelial cells. Likely to plays a role in the budding process through its association with lipid rafts during intracellular transport. May additionally display a raft-association independent effect on budding. Plays a role in the determination of host range restriction on replication and virulence. Sialidase activity in late endosome/lysosome traffic seems to enhance virus replication. The chain is Neuraminidase from Influenza A virus (strain A/Udorn/307/1972 H3N2).